The sequence spans 514 residues: Cytochrome P450 71AP13 (514 aa).

Residues 20 to 37 traverse the membrane as a helical segment; it reads HSSLFAFSLLILLLKFIY. N-linked (GlcNAc...) asparagine glycosylation is found at Asn127 and Asn184. Cys455 provides a ligand contact to heme.

It belongs to the cytochrome P450 family. Heme is required as a cofactor. Expressed in fruit kernel, seedlings, leaves and stems.

The protein localises to the membrane. This is Cytochrome P450 71AP13 from Prunus mume (Japanese apricot).